We begin with the raw amino-acid sequence, 499 residues long: Low-affinity inorganic phosphate transporter PitB (499 aa).

The next 10 helical transmembrane spans lie at 5–25, 52–72, 94–114, 124–144, 155–175, 207–227, 233–253, 382–402, 430–450, and 473–493; these read FVGL…FVLF, LAVV…GLSV, LAMV…TWFF, LIGA…SSVM, IFSS…GLIF, PFWT…SHGA, GIGL…VVNM, APVW…MIGW, AAVS…THVL, and ILMA…GLYW.

The protein belongs to the inorganic phosphate transporter (PiT) (TC 2.A.20) family. Pit subfamily.

The protein resides in the cell inner membrane. It carries out the reaction phosphate(in) + H(+)(in) = phosphate(out) + H(+)(out). Functionally, low-affinity inorganic phosphate transporter. The chain is Low-affinity inorganic phosphate transporter PitB from Escherichia coli (strain K12).